The primary structure comprises 832 residues: MADPAAESIDASSSRFGRVVCYNQTAMHGSNTISAAAPFFMTQLSVANLTYRILYYFLKPLCLPPFVAQILCGLLFSPTVLGNNEVVLKLIFPYKYTMLLETFANLALVYNVFLLGLGLDLRMIKIKDIKPVIIAIVGLLAALLAGAGLYYLPSNGEADKILAGCMYWSIAFGCTNFPDLARILADLKLLRTDMGHTAMCAAVVTDLCTWILFIFGMAIFSKSGVRNEMLPYSLASTIAFVLLCYFVIQPGVAWIFNNTVEGGQVGDTHVWYTLAGVIICSLITEVCGVHSITGAFLFGLSIPHDHIIRKMIEEKLHDFLSGMLMPLFYIICGLRADIGYMNRTVSVGMMAVVTSASVMVKILSTMFCSIFLRIPLRDGLAIGALMNTKGTMALVILNAGRDTKALDVIMYTHLTLAFLVMSMVVQPLLAIAYKPKKKLIFYKNRTIQKHKGESELCVLTCVHVLPNVSGITNLLQLSNPTKKSPLNVFAIHLVELTGRTTASLLIMNDEAKPKANFADRVRAESDQIAEMFTALEVNNDGVMVQTITAVSPYATMDEDICLLAEDKQACFILLPYHKNMTSDGRLNEGNAVHAEINQNVMSHAPCSVGILVDRGMTTVRFESFMFQGETTKKEIAMLFLGGRDDREALAYAWRMVGQEMVQLTVVRFVPSQEALVSAGEAADEYEKDKHVDEESIYEFNFKTMNDPSVTYVEKVVKNGQETITAILELEDNNSYDLYIVGRGYQVETPVTSGLTDWNSTPDLGIIGDTLISSNFTMQASVLVVQQYSSANRQTAENNNQEPVQGKAKTDHEATPFMEDEDDEVEHQYSMRR.

Transmembrane regions (helical) follow at residues 33–55 (ISAA…RILY), 61–81 (LCLP…PTVL), 99–119 (LLET…GLGL), 132–152 (VIIA…LYYL), 161–181 (ILAG…PDLA), 200–220 (CAAV…MAIF), 236–256 (STIA…AWIF), 278–298 (IICS…AFLF), 319–339 (FLSG…ADIG), 352–372 (VVTS…SIFL), 379–399 (GLAI…ILNA), and 413–433 (HLTL…AIAY). Over residues 792 to 802 (RQTAENNNQEP) the composition is skewed to polar residues. The segment at 792–832 (RQTAENNNQEPVQGKAKTDHEATPFMEDEDDEVEHQYSMRR) is disordered.

It belongs to the monovalent cation:proton antiporter 2 (CPA2) transporter (TC 2.A.37) family. CHX (TC 2.A.37.4) subfamily. Specifically expressed in root endodermal cells. Expressed in seedlings, roots, leaves, flowers, flower buds and pollen.

It is found in the cell membrane. Its function is as follows. Operates as a Na(+)/H(+) antiporter that plays a role in regulation of xylem Na(+) concentration and, consequently, Na(+) accumulation in the leaf. Required for pollen tube guidance, but not for normal pollen development. May also be involved in the development or function of the female gametophyte. The polypeptide is Cation/H(+) antiporter 21 (CHX21) (Arabidopsis thaliana (Mouse-ear cress)).